Consider the following 180-residue polypeptide: Lipid droplet coating protein Cap20 (180 aa).

It belongs to the perilipin family. As to quaternary structure, interacts with class I hydrophobin Hydr1. Interacts also with the cAMP-dependent protein kinase catalytic subunit PkaC1.

It is found in the lipid droplet. In terms of biological role, lipid droplet coating protein that regulates lipid metabolism, appressorial turgor pressure, and virulence. Mature appressoria with high turgor pressure are essential to penetrate the leaf surface. The chain is Lipid droplet coating protein Cap20 from Colletotrichum siamense (Anthracnose fungus).